The following is a 385-amino-acid chain: 4-hydroxy-3-methylbut-2-en-1-yl diphosphate synthase (flavodoxin) 1 (385 aa).

[4Fe-4S] cluster is bound by residues cysteine 280, cysteine 283, cysteine 315, and glutamate 322.

It belongs to the IspG family. It depends on [4Fe-4S] cluster as a cofactor.

The catalysed reaction is (2E)-4-hydroxy-3-methylbut-2-enyl diphosphate + oxidized [flavodoxin] + H2O + 2 H(+) = 2-C-methyl-D-erythritol 2,4-cyclic diphosphate + reduced [flavodoxin]. It participates in isoprenoid biosynthesis; isopentenyl diphosphate biosynthesis via DXP pathway; isopentenyl diphosphate from 1-deoxy-D-xylulose 5-phosphate: step 5/6. In terms of biological role, converts 2C-methyl-D-erythritol 2,4-cyclodiphosphate (ME-2,4cPP) into 1-hydroxy-2-methyl-2-(E)-butenyl 4-diphosphate. This is 4-hydroxy-3-methylbut-2-en-1-yl diphosphate synthase (flavodoxin) 1 from Streptomyces avermitilis (strain ATCC 31267 / DSM 46492 / JCM 5070 / NBRC 14893 / NCIMB 12804 / NRRL 8165 / MA-4680).